Here is a 266-residue protein sequence, read N- to C-terminus: Energy-coupling factor transporter transmembrane protein EcfT 1 (266 aa).

5 helical membrane-spanning segments follow: residues Ile33–Leu53, Leu73–Ile93, Leu107–Ile127, Val152–Met172, and His243–Leu263.

Belongs to the energy-coupling factor EcfT family. As to quaternary structure, forms a stable energy-coupling factor (ECF) transporter complex composed of 2 membrane-embedded substrate-binding proteins (S component), 2 ATP-binding proteins (A component) and 2 transmembrane proteins (T component). May be able to interact with more than 1 S component at a time.

The protein resides in the cell membrane. In terms of biological role, transmembrane (T) component of an energy-coupling factor (ECF) ABC-transporter complex. Unlike classic ABC transporters this ECF transporter provides the energy necessary to transport a number of different substrates. The sequence is that of Energy-coupling factor transporter transmembrane protein EcfT 1 from Listeria monocytogenes serotype 1/2a (strain 08-5578).